A 132-amino-acid polypeptide reads, in one-letter code: Fatty acid-binding protein, brain (132 aa).

Val-2 carries the N-acetylvaline modification. 127-129 (RHY) contributes to the a fatty acid binding site.

The protein belongs to the calycin superfamily. Fatty-acid binding protein (FABP) family.

The protein localises to the cytoplasm. Functionally, FABPs are thought to play a role in the intracellular transport of long-chain fatty acids and their acyl-CoA esters. The sequence is that of Fatty acid-binding protein, brain (FABP7) from Gallus gallus (Chicken).